Reading from the N-terminus, the 37-residue chain is Photosystem II reaction center protein K (37 aa).

The Lumenal portion of the chain corresponds to 1–15 (KLPEAYAIFDPLVDV). A helical transmembrane segment spans residues 16-30 (LPVIPVLFFALAFVV). Residues 31-37 (QAAVGFR) lie on the Cytoplasmic side of the membrane.

Belongs to the PsbK family. PSII is composed of 1 copy each of membrane proteins PsbA, PsbB, PsbC, PsbD, PsbE, PsbF, PsbH, PsbI, PsbJ, PsbK, PsbL, PsbM, PsbT, PsbX, PsbY, PsbZ, Psb30/Ycf12, peripheral proteins PsbO, CyanoQ (PsbQ), PsbU, PsbV and a large number of cofactors. It forms dimeric complexes. The cofactor is PSII binds multiple chlorophylls, carotenoids and specific lipids..

It is found in the cellular thylakoid membrane. One of the components of the core complex of photosystem II (PSII). PSII is a light-driven water:plastoquinone oxidoreductase that uses light energy to abstract electrons from H(2)O, generating O(2) and a proton gradient subsequently used for ATP formation. It consists of a core antenna complex that captures photons, and an electron transfer chain that converts photonic excitation into a charge separation. This Thermostichus vulcanus (Synechococcus vulcanus) protein is Photosystem II reaction center protein K.